A 443-amino-acid polypeptide reads, in one-letter code: GTPase Der (443 aa).

EngA-type G domains lie at 3-167 and 176-349; these read PVIA…PEEK and IKIA…QSIQ. GTP-binding positions include 9-16, 56-60, 119-122, 182-189, 229-233, and 294-297; these read GRPNVGKS, DTGGL, NKAD, DTAGI, and NKWD. Residues 350 to 434 form the KH-like domain; sequence QELTTGQLTR…PVHIKLKTDP (85 aa).

Belongs to the TRAFAC class TrmE-Era-EngA-EngB-Septin-like GTPase superfamily. EngA (Der) GTPase family. Associates with the 50S ribosomal subunit.

Functionally, GTPase that plays an essential role in the late steps of ribosome biogenesis. This Coxiella burnetii (strain CbuK_Q154) (Coxiella burnetii (strain Q154)) protein is GTPase Der.